We begin with the raw amino-acid sequence, 156 residues long: Small ribosomal subunit protein uS7 (156 aa).

The protein belongs to the universal ribosomal protein uS7 family. As to quaternary structure, part of the 30S ribosomal subunit. Contacts proteins S9 and S11.

Functionally, one of the primary rRNA binding proteins, it binds directly to 16S rRNA where it nucleates assembly of the head domain of the 30S subunit. Is located at the subunit interface close to the decoding center, probably blocks exit of the E-site tRNA. This is Small ribosomal subunit protein uS7 from Nitratidesulfovibrio vulgaris (strain DSM 19637 / Miyazaki F) (Desulfovibrio vulgaris).